A 557-amino-acid polypeptide reads, in one-letter code: Aspartate--tRNA ligase (557 aa).

E168 contributes to the L-aspartate binding site. An aspartate region spans residues Q192 to K195. Residue R214 participates in L-aspartate binding. Residues R214–E216 and Q223 each bind ATP. H423 lines the L-aspartate pocket. E457 provides a ligand contact to ATP. R464 serves as a coordination point for L-aspartate. Position 505 to 508 (G505 to R508) interacts with ATP.

It belongs to the class-II aminoacyl-tRNA synthetase family. Type 1 subfamily. In terms of assembly, homodimer.

The protein resides in the cytoplasm. It carries out the reaction tRNA(Asp) + L-aspartate + ATP = L-aspartyl-tRNA(Asp) + AMP + diphosphate. Catalyzes the attachment of L-aspartate to tRNA(Asp) in a two-step reaction: L-aspartate is first activated by ATP to form Asp-AMP and then transferred to the acceptor end of tRNA(Asp). In Mycoplasma pneumoniae (strain ATCC 29342 / M129 / Subtype 1) (Mycoplasmoides pneumoniae), this protein is Aspartate--tRNA ligase.